We begin with the raw amino-acid sequence, 260 residues long: Small ribosomal subunit protein cS22 (260 aa).

Residues 1–62 (MATISSILPC…TNPPLLKVRA (62 aa)) constitute a chloroplast transit peptide. Positions 63–78 (VVTEETSSSSTASSSS) are enriched in low complexity. Residues 63-83 (VVTEETSSSSTASSSSDGEGA) form a disordered region. 2 RRM domains span residues 84-162 (RRLY…ITEK) and 184-260 (YKVY…VNKA).

In terms of assembly, component of the chloroplast small ribosomal subunit (SSU). Mature 70S chloroplast ribosomes of higher plants consist of a small (30S) and a large (50S) subunit. The 30S small subunit contains 1 molecule of ribosomal RNA (16S rRNA) and 24 different proteins. The 50S large subunit contains 3 rRNA molecules (23S, 5S and 4.5S rRNA) and 33 different proteins.

Its subcellular location is the plastid. The protein localises to the chloroplast. Component of the chloroplast ribosome (chloro-ribosome), a dedicated translation machinery responsible for the synthesis of chloroplast genome-encoded proteins, including proteins of the transcription and translation machinery and components of the photosynthetic apparatus. cS22 may have a role in the recruitment of stored chloroplast mRNAs for active protein synthesis. The protein is Small ribosomal subunit protein cS22 (PSRP2) of Spinacia oleracea (Spinach).